The following is a 286-amino-acid chain: GTP-binding protein 8 (286 aa).

An EngB-type G domain is found at 105-278 (KQPEVCFMGR…RCFIAHVTGK (174 aa)). Residues 113 to 120 (GRSNVGKS), 142 to 146 (GHTKK), 160 to 163 (DMPG), 222 to 225 (TKID), and 257 to 259 (VSS) contribute to the GTP site. Mg(2+) is bound by residues serine 120 and threonine 144.

This sequence belongs to the TRAFAC class TrmE-Era-EngA-EngB-Septin-like GTPase superfamily. EngB GTPase family. It depends on Mg(2+) as a cofactor.

In Danio rerio (Zebrafish), this protein is GTP-binding protein 8 (gtpbp8).